We begin with the raw amino-acid sequence, 431 residues long: Dihydroorotase (431 aa).

Residues His-55 and His-57 each coordinate Zn(2+). Substrate-binding positions include His-57–Arg-59 and Asn-89. Zn(2+) is bound by residues Lys-139, His-169, His-223, and Asp-290. Lys-139 is subject to N6-carboxylysine. The active site involves Asp-290. Substrate is bound by residues His-294 and Pro-308–Gly-309.

It belongs to the metallo-dependent hydrolases superfamily. DHOase family. Class I DHOase subfamily. Zn(2+) is required as a cofactor.

It catalyses the reaction (S)-dihydroorotate + H2O = N-carbamoyl-L-aspartate + H(+). Its pathway is pyrimidine metabolism; UMP biosynthesis via de novo pathway; (S)-dihydroorotate from bicarbonate: step 3/3. Catalyzes the reversible cyclization of carbamoyl aspartate to dihydroorotate. The sequence is that of Dihydroorotase from Methanothermobacter thermautotrophicus (strain ATCC 29096 / DSM 1053 / JCM 10044 / NBRC 100330 / Delta H) (Methanobacterium thermoautotrophicum).